A 60-amino-acid polypeptide reads, in one-letter code: Metallothionein A (60 aa).

The segment at 1–28 (MDPCDCSKSGTCNCGGSCTCTNCSCKSC) is beta. Residues Cys4, Cys6, Cys12, Cys14, Cys18, Cys20, Cys23, Cys25, Cys28, Cys32, Cys33, Cys35, Cys36, Cys40, Cys43, Cys47, Cys49, Cys54, Cys58, and Cys59 each contribute to the a divalent metal cation site. The segment at 29–60 (KKSCCPCCPSGCTKCASGCVCKGKTCDTSCCQ) is alpha.

This sequence belongs to the metallothionein superfamily. Type 1 family.

In terms of biological role, metallothioneins have a high content of cysteine residues that bind various heavy metals. This is Metallothionein A (mta) from Chionodraco hamatus (Antarctic teleost icefish).